Here is a 382-residue protein sequence, read N- to C-terminus: Lipid-A-disaccharide synthase (382 aa).

This sequence belongs to the LpxB family.

The enzyme catalyses 2-N,3-O-bis[(3R)-3-hydroxytetradecanoyl]-alpha-D-glucosaminyl 1-phosphate + UDP-2-N,3-O-bis[(3R)-3-hydroxytetradecanoyl]-alpha-D-glucosamine = lipid A disaccharide (E. coli) + UDP + H(+). It catalyses the reaction a lipid X + a UDP-2-N,3-O-bis[(3R)-3-hydroxyacyl]-alpha-D-glucosamine = a lipid A disaccharide + UDP + H(+). Its pathway is glycolipid biosynthesis; lipid IV(A) biosynthesis; lipid IV(A) from (3R)-3-hydroxytetradecanoyl-[acyl-carrier-protein] and UDP-N-acetyl-alpha-D-glucosamine: step 5/6. In terms of biological role, condensation of UDP-2,3-diacylglucosamine and 2,3-diacylglucosamine-1-phosphate to form lipid A disaccharide, a precursor of lipid A, a phosphorylated glycolipid that anchors the lipopolysaccharide to the outer membrane of the cell. The chain is Lipid-A-disaccharide synthase from Escherichia coli (strain SMS-3-5 / SECEC).